Consider the following 433-residue polypeptide: Gamma-glutamyl phosphate reductase (433 aa).

It belongs to the gamma-glutamyl phosphate reductase family.

The protein resides in the cytoplasm. The enzyme catalyses L-glutamate 5-semialdehyde + phosphate + NADP(+) = L-glutamyl 5-phosphate + NADPH + H(+). Its pathway is amino-acid biosynthesis; L-proline biosynthesis; L-glutamate 5-semialdehyde from L-glutamate: step 2/2. Its function is as follows. Catalyzes the NADPH-dependent reduction of L-glutamate 5-phosphate into L-glutamate 5-semialdehyde and phosphate. The product spontaneously undergoes cyclization to form 1-pyrroline-5-carboxylate. This Cyanothece sp. (strain PCC 7425 / ATCC 29141) protein is Gamma-glutamyl phosphate reductase.